Here is a 723-residue protein sequence, read N- to C-terminus: tRNA (guanine(27)-N(2))-dimethyltransferase (723 aa).

Acidic residues predominate over residues 1 to 10; that stretch reads MENMAEEELL. The interval 1 to 72 is disordered; sequence MENMAEEELL…SLASVPEEAE (72 aa). Phosphothreonine is present on Thr-23. Low complexity predominate over residues 32–44; that stretch reads PAADTALDSAPTP. Pro residues predominate over residues 45 to 59; the sequence is DSAPAPALAPAPAPA. Ser-61 carries the post-translational modification Phosphoserine. A Nucleolar localization signal motif is present at residues 128 to 132; it reads HKLRR. Residues 177-199 form a C2H2-type zinc finger; that stretch reads YHCIICSATITRRTDMLGHVKRH. Residues 220–679 enclose the Trm1 methyltransferase domain; that stretch reads EVLKETDTDI…ASLTQFKSIL (460 aa). Residues Arg-253, Asp-300, Asp-348, and Ala-349 each contribute to the S-adenosyl-L-methionine site. The Zn(2+) site is built by Cys-479, Cys-482, Cys-504, and Cys-506. Lys-576 participates in a covalent cross-link: Glycyl lysine isopeptide (Lys-Gly) (interchain with G-Cter in SUMO2). Ser-603 is modified (phosphoserine).

It belongs to the class I-like SAM-binding methyltransferase superfamily. Trm1 family.

The protein resides in the nucleus. It is found in the nucleolus. It carries out the reaction guanosine(27) in tRNA(Tyr) + 2 S-adenosyl-L-methionine = N(2)-dimethylguanosine(27) in tRNA(Tyr) + 2 S-adenosyl-L-homocysteine + 2 H(+). Specifically dimethylates a single guanine residue at position 27 of tRNA(Tyr) using S-adenosyl-L-methionine as donor of the methyl groups. Dimethylation at position 27 of tRNA(Tyr) is required for efficient translation of tyrosine codons. Also required to maintain 3-(3-amino-3-carboxypropyl)uridine (acp3U) in the D-loop of several cytoplasmic tRNAs. The chain is tRNA (guanine(27)-N(2))-dimethyltransferase from Rattus norvegicus (Rat).